Here is a 224-residue protein sequence, read N- to C-terminus: Small ribosomal subunit protein uS3 (224 aa).

A KH type-2 domain is found at 38–106 (LREFVKEKLG…EVYLNVVEVR (69 aa)).

It belongs to the universal ribosomal protein uS3 family. Part of the 30S ribosomal subunit. Forms a tight complex with proteins S10 and S14.

Functionally, binds the lower part of the 30S subunit head. Binds mRNA in the 70S ribosome, positioning it for translation. The sequence is that of Small ribosomal subunit protein uS3 from Anaeromyxobacter dehalogenans (strain 2CP-1 / ATCC BAA-258).